We begin with the raw amino-acid sequence, 98 residues long: NADH-ubiquinone oxidoreductase chain 4L (98 aa).

3 consecutive transmembrane segments (helical) span residues Met1–Thr21, Val27–Ile47, and Ile61–Ile81.

This sequence belongs to the complex I subunit 4L family. As to quaternary structure, core subunit of respiratory chain NADH dehydrogenase (Complex I) which is composed of 45 different subunits.

It is found in the mitochondrion inner membrane. The enzyme catalyses a ubiquinone + NADH + 5 H(+)(in) = a ubiquinol + NAD(+) + 4 H(+)(out). Functionally, core subunit of the mitochondrial membrane respiratory chain NADH dehydrogenase (Complex I) which catalyzes electron transfer from NADH through the respiratory chain, using ubiquinone as an electron acceptor. Part of the enzyme membrane arm which is embedded in the lipid bilayer and involved in proton translocation. This is NADH-ubiquinone oxidoreductase chain 4L (MT-ND4L) from Macaca mulatta (Rhesus macaque).